Reading from the N-terminus, the 352-residue chain is Sodium-lithium/proton antiporter (352 aa).

The next 8 membrane-spanning stretches (helical) occupy residues 11-31 (ILLLLGILFVVAGYFILPVSV), 32-52 (PLIIALITALFLNPAVRWMQF), 61-81 (AVTIVFLLFVIMIGLLGTYAV), 159-179 (IPEYLISFLVYLIALFLFMLE), 216-236 (AQFLVSIVIFVVCLIGLFWIT), 241-261 (IVMSLIIWIVDFVPIIGSIVI), 271-291 (IVGDIAMGGQLAMLAIILLAI), and 317-337 (IGLQLIGLMGFILGPLLVIAF).

Belongs to the autoinducer-2 exporter (AI-2E) (TC 2.A.86) family.

It localises to the cell membrane. Catalyzes the pH-dependent efflux of sodium and lithium in exchange for external protons. The chain is Sodium-lithium/proton antiporter from Halobacillus andaensis.